The following is a 349-amino-acid chain: DNA replication and repair protein RecF (349 aa).

29-36 contributes to the ATP binding site; sequence GLNGVGKT.

The protein belongs to the RecF family.

The protein localises to the cytoplasm. Functionally, the RecF protein is involved in DNA metabolism; it is required for DNA replication and normal SOS inducibility. RecF binds preferentially to single-stranded, linear DNA. It also seems to bind ATP. The chain is DNA replication and repair protein RecF from Acholeplasma laidlawii (strain PG-8A).